The chain runs to 143 residues: MTESETTSKKVNKRVKPVPKSTKAGLIFPVGRIHRMLKNKVPLKRVSILSSVYLAAILEYLASEVLELTISQVSIQSKEYHNVRRISPRHLLLAIKTDEELDNLIRVSTTIAGGGVIPYIHEVLKKVEQKPTHPQQKQTIKSI.

The protein belongs to the histone H2A family. The nucleosome is a histone octamer containing two molecules each of H2A, H2B, H3 and H4 assembled in one H3-H4 heterotetramer and two H2A-H2B heterodimers. The octamer wraps approximately 147 bp of DNA.

The protein localises to the nucleus. It is found in the chromosome. Core component of nucleosome which plays a central role in DNA double strand break (DSB) repair. Nucleosomes wrap and compact DNA into chromatin, limiting DNA accessibility to the cellular machineries which require DNA as a template. Histones thereby play a central role in transcription regulation, DNA repair, DNA replication and chromosomal stability. DNA accessibility is regulated via a complex set of post-translational modifications of histones, also called histone code, and nucleosome remodeling. The chain is Histone H2A.z (H2AZ) from Dictyostelium discoideum (Social amoeba).